Consider the following 391-residue polypeptide: Septation protein etd1 (391 aa).

The interval 49 to 68 (MKSYGSDITPRRPKQLGLPK) is disordered.

In terms of biological role, involved in septation. This is Septation protein etd1 (etd1) from Schizosaccharomyces pombe (strain 972 / ATCC 24843) (Fission yeast).